A 442-amino-acid chain; its full sequence is ATP-dependent protease ATPase subunit HslU (442 aa).

Residues Ile18 and 60-65 (GVGKTE) each bind ATP. The disordered stretch occupies residues 137–156 (PKPKNDWESTETDSSSNTRQ). Residues Asp255, Glu320, and Arg392 each contribute to the ATP site.

This sequence belongs to the ClpX chaperone family. HslU subfamily. A double ring-shaped homohexamer of HslV is capped on each side by a ring-shaped HslU homohexamer. The assembly of the HslU/HslV complex is dependent on binding of ATP.

The protein resides in the cytoplasm. ATPase subunit of a proteasome-like degradation complex; this subunit has chaperone activity. The binding of ATP and its subsequent hydrolysis by HslU are essential for unfolding of protein substrates subsequently hydrolyzed by HslV. HslU recognizes the N-terminal part of its protein substrates and unfolds these before they are guided to HslV for hydrolysis. The chain is ATP-dependent protease ATPase subunit HslU from Shewanella baltica (strain OS155 / ATCC BAA-1091).